A 400-amino-acid chain; its full sequence is Nicotinate phosphoribosyltransferase (400 aa).

Phosphohistidine; by autocatalysis is present on histidine 220.

It belongs to the NAPRTase family. Post-translationally, transiently phosphorylated on a His residue during the reaction cycle. Phosphorylation strongly increases the affinity for substrates and increases the rate of nicotinate D-ribonucleotide production. Dephosphorylation regenerates the low-affinity form of the enzyme, leading to product release.

The enzyme catalyses nicotinate + 5-phospho-alpha-D-ribose 1-diphosphate + ATP + H2O = nicotinate beta-D-ribonucleotide + ADP + phosphate + diphosphate. Its pathway is cofactor biosynthesis; NAD(+) biosynthesis; nicotinate D-ribonucleotide from nicotinate: step 1/1. In terms of biological role, catalyzes the synthesis of beta-nicotinate D-ribonucleotide from nicotinate and 5-phospho-D-ribose 1-phosphate at the expense of ATP. The polypeptide is Nicotinate phosphoribosyltransferase (Salmonella typhimurium (strain LT2 / SGSC1412 / ATCC 700720)).